The chain runs to 112 residues: Cryptic phage CTXphi transcriptional repressor RstR (112 aa).

The 55-residue stretch at 7-61 (LANQRKAINKTQAQMADEIGISLTSYKKYESGEGLPTMENLVKIADALEISIDEL) folds into the HTH cro/C1-type domain. The segment at residues 18 to 37 (QAQMADEIGISLTSYKKYES) is a DNA-binding region (H-T-H motif).

In terms of biological role, transcriptional repressor of the integrated CTXPhi phage gene rstA2. The chain is Cryptic phage CTXphi transcriptional repressor RstR (rstR1) from Vibrio cholerae serotype O1 (strain ATCC 39315 / El Tor Inaba N16961).